The chain runs to 737 residues: MDSHQLELPDGLNNMTMDADTLISLFVLVVCRSEQKHLKSHLYYLQNFSNNSSSTKFGILGYAVSTLEAVVCYFEDFNKNTGNVAKANTLCEKTKNLLDKLSCENPTNEVEDLATYKDILTYRNEQGQSILSICITNHKNYILLDILSEYENDFPVEDLLEDETIDGSTLLIESIKAGNLEAAKVLIKIMLFNCTEEELVSYINKTDKYARTVAHYLTHEMDILKSIGNYIDWKRKNSSGQTPLFSIFRSYDQPNYEEMVKTAFDIANTWYRKHNSLFDYLDHTDNKGNSLLHVLKTNIPILLQLTKLDINEENYKGLTPLMVYVKYKRLSNIDAITKDRRLILEKVQNSTFFTCFDYAKDHSVLSKIGERGVKDSLFGLIYFHSLRYHNLNATTNITSVSNAEKPFATTVINMKTIQGLLRSILKDNPFTFLPLNTYIDEISHLNRSDLTIIGKTDVTSLLHQLTNCFNVLLFLKKIPENLFTDEASILYWMRINTSKRNQKPSGKENPKTMEPEEINMIQSFLRFNFDEISSFKASLNILRKVLIFINLKSDDFEDAYKGLNEMGRKLINSEASSAFKGIITNHNMFSELSLAALLENVRFLEQCTIQLSSFVQIILFEKIPNWWKHYGEFLALHKSYRKAFPNMVKPKSASDTSSRAPLGGFIETKREQSEQRLAVQIKASSKMLKELGSEIFVAHERLAEELSNYMEFRKACLDQRSLVAFATTNISVLQECV.

The 83-residue stretch at 1 to 83 (MDSHQLELPD…FEDFNKNTGN (83 aa)) folds into the VPS9 domain.

This sequence belongs to the UPF0507 family.

The polypeptide is UPF0507 protein YML002W (Saccharomyces cerevisiae (strain ATCC 204508 / S288c) (Baker's yeast)).